We begin with the raw amino-acid sequence, 541 residues long: Tyrosine-protein kinase Yes (541 aa).

Basic and acidic residues predominate over residues 1–20 (MGCIKSKEDKGPAMKYRTDN). Residues 1–43 (MGCIKSKEDKGPAMKYRTDNTPEPISSHVSHYGSDSSQATQSP) form a disordered region. Gly2 carries the N-myristoyl glycine lipid modification. Residue Cys3 is the site of S-palmitoyl cysteine; in membrane form attachment. The segment covering 26 to 37 (SSHVSHYGSDSS) has biased composition (low complexity). The 62-residue stretch at 89-150 (GGVTVFVALY…PSNYVAPADS (62 aa)) folds into the SH3 domain. One can recognise an SH2 domain in the interval 156 to 253 (WYFGKMGRKD…GLCHKLTTVC (98 aa)). Positions 275 to 528 (LRLEVKLGQG…YIQSFLEDYF (254 aa)) constitute a Protein kinase domain. Residues 281 to 289 (LGQGCFGEV) and Lys303 contribute to the ATP site. The Proton acceptor role is filled by Asp394. The residue at position 424 (Tyr424) is a Phosphotyrosine; by autocatalysis. Tyr535 carries the phosphotyrosine; by CSK modification.

The protein belongs to the protein kinase superfamily. Tyr protein kinase family. SRC subfamily. Post-translationally, autophosphorylation at Tyr-424 maintains enzyme activity. Palmitoylation at Cys-3 promotes membrane localization.

It is found in the cell membrane. It localises to the cytoplasm. Its subcellular location is the cytoskeleton. The protein localises to the microtubule organizing center. The protein resides in the centrosome. It is found in the cytosol. It localises to the cell junction. The catalysed reaction is L-tyrosyl-[protein] + ATP = O-phospho-L-tyrosyl-[protein] + ADP + H(+). Functionally, non-receptor protein tyrosine kinase that is involved in the regulation of cell growth and survival, apoptosis, cell-cell adhesion, cytoskeleton remodeling, differentiation, G2/M progression and cytokinesis. The polypeptide is Tyrosine-protein kinase Yes (YES1) (Gallus gallus (Chicken)).